A 338-amino-acid polypeptide reads, in one-letter code: Heme-dependent oxidative N-demethylase alpha subunit (338 aa).

Positions 38 and 194 each coordinate heme b. The Proton donor role is filled by Arg224. Asn226 is a heme b binding site. Glu266 lines the dimethylamine pocket. Tyr317 and Lys318 together coordinate heme b.

In terms of assembly, the heme-dependent oxidative N-demethylase (HODM) is a heterotetramer composed of a catalytic alpha subunit, a FMN/2Fe-2S-dependent oxidoreductase beta subunit, a gamma subunit with putative aminotransferase activity, and a delta subunit of unknown function.

It catalyses the reaction dimethylamine + NADPH + O2 + H(+) = methylamine + formaldehyde + NADP(+) + H2O. Functionally, component of the heme-dependent oxidative N-demethylase (HODM) enzyme, that catalyzes the NADPH-dependent oxidation of dimethylamine (DMA) to methylamine (MA) and formaldehyde. Functions in bacterial methylated amine catabolism, linking alkylamine oxidation to the tetrahydrofolate C1 pool. The alpha subunit of HODM binds heme, oxygen and DMA, and serves as the site of the oxidative N-demethylase activity. In Ectopseudomonas mendocina (strain ymp) (Pseudomonas mendocina), this protein is Heme-dependent oxidative N-demethylase alpha subunit.